We begin with the raw amino-acid sequence, 556 residues long: 2-succinyl-5-enolpyruvyl-6-hydroxy-3-cyclohexene-1-carboxylate synthase (556 aa).

It belongs to the TPP enzyme family. MenD subfamily. As to quaternary structure, homodimer. It depends on Mg(2+) as a cofactor. The cofactor is Mn(2+). Requires thiamine diphosphate as cofactor.

It catalyses the reaction isochorismate + 2-oxoglutarate + H(+) = 5-enolpyruvoyl-6-hydroxy-2-succinyl-cyclohex-3-ene-1-carboxylate + CO2. The protein operates within quinol/quinone metabolism; 1,4-dihydroxy-2-naphthoate biosynthesis; 1,4-dihydroxy-2-naphthoate from chorismate: step 2/7. Its pathway is quinol/quinone metabolism; menaquinone biosynthesis. Functionally, catalyzes the thiamine diphosphate-dependent decarboxylation of 2-oxoglutarate and the subsequent addition of the resulting succinic semialdehyde-thiamine pyrophosphate anion to isochorismate to yield 2-succinyl-5-enolpyruvyl-6-hydroxy-3-cyclohexene-1-carboxylate (SEPHCHC). This chain is 2-succinyl-5-enolpyruvyl-6-hydroxy-3-cyclohexene-1-carboxylate synthase, found in Salmonella gallinarum (strain 287/91 / NCTC 13346).